We begin with the raw amino-acid sequence, 193 residues long: Major structural subunit of bundle-forming pilus (193 aa).

Positions 1 to 13 (MVSKIMNKKYEKG) are cleaved as a propeptide — leader sequence. Position 14 is an N-methylleucine (leucine 14). Residues 14-35 (LSLIESAMVLALAATVTAGVMF) traverse the membrane as a helical segment. Cysteine 129 and cysteine 179 are joined by a disulfide.

This sequence belongs to the N-Me-Phe pilin family. In terms of assembly, 10 to 100 laterally aligned filaments or bundle-forming pili coalesce into rope-like bundles. These form linkages between the bacteria within the enteropathogenic E.coli (EPEC) microcolonies that are attached to epithelial cells.

It localises to the fimbrium. The protein localises to the membrane. Functionally, major component of type IV bundle-forming pili (BFP) that plays a role in adherence to host cells and virulence. The sequence is that of Major structural subunit of bundle-forming pilus (bfpA) from Escherichia coli O127:H6 (strain E2348/69 / EPEC).